The following is a 181-amino-acid chain: Ribosome maturation factor RimM (181 aa).

Residues 100 to 177 (EEGFYWMQLI…QIQVDWQLED (78 aa)) enclose the PRC barrel domain.

This sequence belongs to the RimM family. As to quaternary structure, binds ribosomal protein uS19.

It localises to the cytoplasm. An accessory protein needed during the final step in the assembly of 30S ribosomal subunit, possibly for assembly of the head region. Essential for efficient processing of 16S rRNA. May be needed both before and after RbfA during the maturation of 16S rRNA. It has affinity for free ribosomal 30S subunits but not for 70S ribosomes. The chain is Ribosome maturation factor RimM from Hydrogenovibrio crunogenus (strain DSM 25203 / XCL-2) (Thiomicrospira crunogena).